We begin with the raw amino-acid sequence, 424 residues long: Protein TUNICAMYCIN INDUCED 1 (424 aa).

The first 25 residues, 1 to 25, serve as a signal peptide directing secretion; it reads MGHRVLVYVGALFLILFTIFPSSSA. Asn-197, Asn-296, and Asn-406 each carry an N-linked (GlcNAc...) asparagine glycan.

As to expression, restricted to pollen grains at high levels.

It is found in the endoplasmic reticulum. Its function is as follows. Involved in the regulation of pollen surface morphology, probably by modulating the secretion of proteins and/or lipids during pollen development. This is Protein TUNICAMYCIN INDUCED 1 from Arabidopsis thaliana (Mouse-ear cress).